Here is a 25-residue protein sequence, read N- to C-terminus: Brevinin-2R (25 aa).

The cysteines at positions 19 and 25 are disulfide-linked.

This sequence belongs to the frog skin active peptide (FSAP) family. Brevinin subfamily. Expressed by the skin glands.

It is found in the secreted. Cytotoxic to cancer cells, acts via the activation of the lysosomal-mitochondrial death pathway and autophagy-like cell death. Does not show significant hemolytic activity. The polypeptide is Brevinin-2R (Pelophylax ridibundus (Marsh frog)).